Consider the following 372-residue polypeptide: 3-ketodihydrosphingosine reductase TSC10 (372 aa).

Residue Val-64 coordinates NADP(+). NADPH is bound by residues Gly-67, Ser-69, Gly-71, Arg-92, Lys-96, Asp-123, and Leu-124. Positions 67–71 match the GXSXG motif; it reads GGSQG. Asp-123 contributes to the NADP(+) binding site. Residue Ser-205 is the Proton donor of the active site. NADP(+) contacts are provided by Tyr-219, Lys-223, and Ser-254. The active-site Proton acceptor is Tyr-219. The active-site Lowers pKa of active site Tyr is Lys-223. A helical membrane pass occupies residues 321 to 341; it reads LLQIPLAIFMCIFSPVWNAFV.

This sequence belongs to the short-chain dehydrogenases/reductases (SDR) family.

It is found in the endoplasmic reticulum membrane. It catalyses the reaction sphinganine + NADP(+) = 3-oxosphinganine + NADPH + H(+). Its pathway is lipid metabolism; sphingolipid metabolism. Its function is as follows. Catalyzes the reduction of 3'-oxosphinganine (3-ketodihydrosphingosine/KDS) to sphinganine (dihydrosphingosine/DHS), the second step of de novo sphingolipid biosynthesis. This is 3-ketodihydrosphingosine reductase TSC10 (TSC10) from Yarrowia lipolytica (strain CLIB 122 / E 150) (Yeast).